We begin with the raw amino-acid sequence, 139 residues long: Small ribosomal subunit protein uS12 (139 aa).

A disordered region spans residues 1–44 (MPTINQLVRKPRQSKITKSKSPALNKGYNSFKKSLTDVKSPQKR). The segment covering 9–18 (RKPRQSKITK) has biased composition (basic residues). Residues 19 to 39 (SKSPALNKGYNSFKKSLTDVK) show a composition bias toward polar residues. Asp-102 carries the post-translational modification 3-methylthioaspartic acid.

It belongs to the universal ribosomal protein uS12 family. Part of the 30S ribosomal subunit. Contacts proteins S8 and S17. May interact with IF1 in the 30S initiation complex.

Functionally, with S4 and S5 plays an important role in translational accuracy. In terms of biological role, interacts with and stabilizes bases of the 16S rRNA that are involved in tRNA selection in the A site and with the mRNA backbone. Located at the interface of the 30S and 50S subunits, it traverses the body of the 30S subunit contacting proteins on the other side and probably holding the rRNA structure together. The combined cluster of proteins S8, S12 and S17 appears to hold together the shoulder and platform of the 30S subunit. The chain is Small ribosomal subunit protein uS12 from Lysinibacillus sphaericus (strain C3-41).